Reading from the N-terminus, the 75-residue chain is Pro-glucagon (75 aa).

Belongs to the glucagon family.

The protein resides in the secreted. Functionally, plays a key role in glucose metabolism and homeostasis. Regulates blood glucose by increasing gluconeogenesis and decreasing glycolysis. The polypeptide is Pro-glucagon (gcg) (Amia calva (Bowfin)).